The sequence spans 161 residues: MLWRRAALAGTRLVWSRSGSAGWLDRAAGAAATAASGMESNTSSSLENLETAPVNQIQETISDNCVVIFSKTSCSYCTMAKKLFRDMNVNYKVVELDLLEYGNQFQDALYKMTGGRTVPRIFVNGTFIGGATDTHRLHKEGKLLPLVHQCYLKKSKRKEFQ.

The N-terminal 19 residues, 1–19 (MLWRRAALAGTRLVWSRSG), are a transit peptide targeting the mitochondrion. At Ser20 the chain carries Phosphoserine. The Glutaredoxin domain occupies 54-154 (VNQIQETISD…PLVHQCYLKK (101 aa)). Residue Cys65 coordinates [2Fe-2S] cluster. Lys71 is a glutathione binding site. Cys74 is subject to S-glutathionyl cysteine; alternate. Cys74 and Cys77 form a disulfide bridge. Residues Gln106 and Val118 each coordinate glutathione. Position 150 (Cys150) interacts with [2Fe-2S] cluster.

This sequence belongs to the glutaredoxin family. In terms of assembly, monomer; active form. Homodimer; inactive form. The homodimer is probably linked by 1 2Fe-2S cluster.

The protein resides in the mitochondrion. Its activity is regulated as follows. The 2Fe-2S present in the homodimer leads to inactivation of the enzyme. The 2Fe-2S may serve as a redox sensor: the presence of one-electron oxidants or reductants leading to the loss of the 2Fe-2S cluster, subsequent monomerization and activation of the enzyme. Functionally, glutathione-dependent oxidoreductase that facilitates the maintenance of mitochondrial redox homeostasis upon induction of apoptosis by oxidative stress. Involved in response to hydrogen peroxide and regulation of apoptosis caused by oxidative stress. Acts as a very efficient catalyst of monothiol reactions because of its high affinity for protein glutathione-mixed disulfides. Can receive electrons not only from glutathione (GSH), but also from thioredoxin reductase supporting both monothiol and dithiol reactions. Efficiently catalyzes both glutathionylation and deglutathionylation of mitochondrial complex I, which in turn regulates the superoxide production by the complex. Overexpression decreases the susceptibility to apoptosis and prevents loss of cardiolipin and cytochrome c release. The sequence is that of Glutaredoxin-2, mitochondrial (GLRX2) from Pongo abelii (Sumatran orangutan).